The following is a 459-amino-acid chain: LETM1 domain-containing protein LETM2, mitochondrial (459 aa).

A mitochondrion-targeting transit peptide spans 1–25 (MAFYSYNSFLAIFWTRLPGHSVHPP). Topologically, residues 26-176 (CSHFPPLAFF…LLRTCADVFR (151 aa)) are mitochondrial intermembrane. The interval 88–114 (GKPQPEQIPEEPKATDPQPTKDDQTEV) is disordered. A compositionally biased stretch (basic and acidic residues) spans 97 to 111 (EEPKATDPQPTKDDQ). The chain crosses the membrane as a helical span at residues 177–197 (LVPFVVFIIVPFMEFLIPVFL). The Mitochondrial matrix segment spans residues 198 to 459 (KLFPDMLPST…QNSKANSKGA (262 aa)). The Letm1 RBD domain occupies 220 to 440 (KMMGAKLEIA…PAPQLNGTKI (221 aa)). Residues 403–459 (LPPSIETPKTNLGIPSSPPPESKEDITDPAPQLNGTKILQAKSQETSQNSKANSKGA) form a disordered region. The segment covering 435-459 (LNGTKILQAKSQETSQNSKANSKGA) has biased composition (polar residues).

Testis and sperm.

The protein localises to the mitochondrion inner membrane. This chain is LETM1 domain-containing protein LETM2, mitochondrial (Letm2), found in Rattus norvegicus (Rat).